The primary structure comprises 458 residues: 5-hydroxytryptamine receptor 2C (458 aa).

Positions 1–32 are cleaved as a signal peptide; that stretch reads MVNLRNAVHSFLVHLIGLLVWQCDISVSPVAA. The Extracellular segment spans residues 33–55; the sequence is IVTDIFNTSDGGRFKFPDGVQNW. A helical transmembrane segment spans residues 56–80; sequence PALSIVVIIIMTIGGNILVIMAVSM. Residues 81–86 are Cytoplasmic-facing; that stretch reads EKKLHN. A helical transmembrane segment spans residues 87-111; the sequence is ATNYFLMSLAIADMLVGLLVMPLSL. Residues 112–128 lie on the Extracellular side of the membrane; it reads LAILYDYVWPLPRYLCP. An intrachain disulfide couples Cys-127 to Cys-207. Residues 129 to 151 traverse the membrane as a helical segment; that stretch reads VWISLDVLFSTASIMHLCAISLD. Residue Thr-139 participates in ergotamine binding. A DRY motif; important for ligand-induced conformation changes motif is present at residues 151–153; that stretch reads DRY. Residues 152-167 are Cytoplasmic-facing; it reads RYVAIRNPIEHSRFNS. A helical membrane pass occupies residues 168–189; the sequence is RTKAIMKIAIVWAISIGVSVPI. Topologically, residues 190–213 are extracellular; the sequence is PVIGLRDERKVFVNNTTCVLNDPN. Leu-209 lines the ergotamine pocket. A helical transmembrane segment spans residues 214-236; sequence FVLIGSFVAFFIPLTIMVITYCL. The Cytoplasmic portion of the chain corresponds to 237-311; it reads TIYVLRRQAL…AINNERKASK (75 aa). A disordered region spans residues 274–301; the sequence is EENSANPNQDQNARRRKKKERRPRGTMQ. The span at 287–297 shows a compositional bias: basic residues; the sequence is RRRKKKERRPR. The helical transmembrane segment at 312–336 threads the bilayer; the sequence is VLGIVFFVFLIMWCPFFITNILSVL. A disulfide bridge connects residues Cys-337 and Cys-341. Topologically, residues 337 to 347 are extracellular; the sequence is CEKSCNQKLME. Residues 348 to 370 form a helical membrane-spanning segment; it reads KLLNVFVWIGYVCSGINPLVYTL. The short motif at 364–368 is the NPxxY motif; important for ligand-induced conformation changes and signaling element; sequence NPLVY. Topologically, residues 371–458 are cytoplasmic; sequence FNKIYRRAFS…SVVSERISSV (88 aa). The PDZ-binding motif lies at 456–458; that stretch reads SSV.

The protein belongs to the G-protein coupled receptor 1 family. Interacts with MPDZ. Interacts with ARRB2. Interacts with MPP3; this interaction stabilizes the receptor at the plasma membrane and prevents the desensitization of the HTR2C receptor-mediated calcium response.

It localises to the cell membrane. Functionally, G-protein coupled receptor for 5-hydroxytryptamine (serotonin). Also functions as a receptor for various drugs and psychoactive substances, including ergot alkaloid derivatives, 1-2,5,-dimethoxy-4-iodophenyl-2-aminopropane (DOI) and lysergic acid diethylamide (LSD). Ligand binding causes a conformation change that triggers signaling via guanine nucleotide-binding proteins (G proteins) and modulates the activity of downstream effectors. HTR2C is coupled to G(q)/G(11) G alpha proteins and activates phospholipase C-beta, releasing diacylglycerol (DAG) and inositol 1,4,5-trisphosphate (IP3) second messengers that modulate the activity of phosphatidylinositol 3-kinase and promote the release of Ca(2+) ions from intracellular stores, respectively. Beta-arrestin family members inhibit signaling via G proteins and mediate activation of alternative signaling pathways. Regulates neuronal activity via the activation of short transient receptor potential calcium channels in the brain, and thereby modulates the activation of pro-opiomelanocortin neurons and the release of CRH that then regulates the release of corticosterone. Plays a role in the regulation of appetite and eating behavior, responses to anxiogenic stimuli and stress. Plays a role in insulin sensitivity and glucose homeostasis. This chain is 5-hydroxytryptamine receptor 2C, found in Pan troglodytes (Chimpanzee).